The sequence spans 297 residues: UDP-N-acetylenolpyruvoylglucosamine reductase (297 aa).

An FAD-binding PCMH-type domain is found at 26–191 (QTGGPAEYLA…IAATFALKAG (166 aa)). Residue Arg170 is part of the active site. Residue Ser220 is the Proton donor of the active site. The active site involves Glu290.

The protein belongs to the MurB family. The cofactor is FAD.

It localises to the cytoplasm. The enzyme catalyses UDP-N-acetyl-alpha-D-muramate + NADP(+) = UDP-N-acetyl-3-O-(1-carboxyvinyl)-alpha-D-glucosamine + NADPH + H(+). The protein operates within cell wall biogenesis; peptidoglycan biosynthesis. In terms of biological role, cell wall formation. This is UDP-N-acetylenolpyruvoylglucosamine reductase from Lactobacillus delbrueckii subsp. bulgaricus (strain ATCC 11842 / DSM 20081 / BCRC 10696 / JCM 1002 / NBRC 13953 / NCIMB 11778 / NCTC 12712 / WDCM 00102 / Lb 14).